The sequence spans 133 residues: ATP synthase epsilon chain, chloroplastic (133 aa).

It belongs to the ATPase epsilon chain family. In terms of assembly, F-type ATPases have 2 components, CF(1) - the catalytic core - and CF(0) - the membrane proton channel. CF(1) has five subunits: alpha(3), beta(3), gamma(1), delta(1), epsilon(1). CF(0) has three main subunits: a, b and c.

The protein localises to the plastid. Its subcellular location is the chloroplast thylakoid membrane. In terms of biological role, produces ATP from ADP in the presence of a proton gradient across the membrane. This Nicotiana sylvestris (Wood tobacco) protein is ATP synthase epsilon chain, chloroplastic.